Consider the following 311-residue polypeptide: Heparan sulfate glucosamine 3-O-sulfotransferase 1 (311 aa).

An N-terminal signal peptide occupies residues 1–20 (MTLLLLGAVLLVAQPQLVHS). An N-linked (GlcNAc...) asparagine glycan is attached at N52. 3'-phosphoadenylyl sulfate contacts are provided by residues 68–72 (KGGTR), R151, and S159. 3 N-linked (GlcNAc...) asparagine glycosylation sites follow: N196, N246, and N253. Position 259 (Y259) interacts with 3'-phosphoadenylyl sulfate. An intrachain disulfide couples C260 to C269. 274–278 (KGRAH) contacts 3'-phosphoadenylyl sulfate.

This sequence belongs to the sulfotransferase 1 family.

It is found in the golgi apparatus lumen. The enzyme catalyses alpha-D-glucosaminyl-[heparan sulfate](n) + 3'-phosphoadenylyl sulfate = 3-sulfo-alpha-D-glucosaminyl-[heparan sulfate](n) + adenosine 3',5'-bisphosphate + H(+). Functionally, sulfotransferase that utilizes 3'-phospho-5'-adenylyl sulfate (PAPS) to catalyze the transfer of a sulfo group to position 3 of glucosamine residues in heparan. Catalyzes the rate limiting step in the biosynthesis of heparan sulfate (HSact). This modification is a crucial step in the biosynthesis of anticoagulant heparan sulfate as it completes the structure of the antithrombin pentasaccharide binding site. The protein is Heparan sulfate glucosamine 3-O-sulfotransferase 1 (Hs3st1) of Mus musculus (Mouse).